Here is a 281-residue protein sequence, read N- to C-terminus: Homoserine kinase (281 aa).

Pro83–Ala93 contacts ATP.

The protein belongs to the GHMP kinase family. Homoserine kinase subfamily.

It localises to the cytoplasm. The catalysed reaction is L-homoserine + ATP = O-phospho-L-homoserine + ADP + H(+). The protein operates within amino-acid biosynthesis; L-threonine biosynthesis; L-threonine from L-aspartate: step 4/5. In terms of biological role, catalyzes the ATP-dependent phosphorylation of L-homoserine to L-homoserine phosphate. This chain is Homoserine kinase, found in Thermotoga petrophila (strain ATCC BAA-488 / DSM 13995 / JCM 10881 / RKU-1).